The sequence spans 326 residues: Probable cell division protein WhiA (326 aa).

The H-T-H motif DNA-binding region spans Ser275–Val308.

It belongs to the WhiA family.

In terms of biological role, involved in cell division and chromosome segregation. The polypeptide is Probable cell division protein WhiA (Clavibacter sepedonicus (Clavibacter michiganensis subsp. sepedonicus)).